Reading from the N-terminus, the 746-residue chain is Histone-lysine N-methyltransferase EZH2 (746 aa).

Residues 1–340 form an interaction with DNMT1, DNMT3A and DNMT3B region; it reads MGQTGKKSEK…AKEFAAALTA (340 aa). Residue Ser-21 is modified to Phosphoserine; by PKB/AKT1. The tract at residues 39–68 is interaction with EED; that stretch reads KSMFSSNRQKILERTEILNQEWKQRRIQPV. Ser-75 carries an O-linked (GlcNAc) serine glycan. Position 76 is a phosphoserine (Ser-76). Residues 180 to 222 form a disordered region; the sequence is QYNDDDDDDDGDDPEEREEKQKDLEDHRDDKESRPPRKFPSDK. The span at 182–195 shows a compositional bias: acidic residues; that stretch reads NDDDDDDDGDDPEE. Over residues 196-222 the composition is skewed to basic and acidic residues; it reads REEKQKDLEDHRDDKESRPPRKFPSDK. The segment at 329–522 is interaction with CDYL; that stretch reads EGAKEFAAAL…SSNHVYNYQP (194 aa). Thr-339 carries the phosphothreonine modification. The interval 340–426 is disordered; it reads AERIKTPPKR…PIKMKPNIEP (87 aa). Thr-345 is subject to Phosphothreonine; by CDK1 and CDK2. Residues 345 to 357 are compositionally biased toward basic residues; sequence TPPKRPGGRRRGR. 2 positions are modified to phosphoserine: Ser-363 and Ser-366. Thr-367 is modified (phosphothreonine). Residues 374–385 are compositionally biased toward basic and acidic residues; the sequence is ESKDTDSDREAG. Residue Thr-487 is modified to Phosphothreonine. A CXC domain is found at 503-605; sequence CRKIQLKKDG…SKNVSCKNCS (103 aa). The SET domain maps to 612-727; sequence KHLLLAPSDV…TGEELFFDYR (116 aa). Residue Lys-634 forms a Glycyl lysine isopeptide (Lys-Gly) (interchain with G-Cter in SUMO2) linkage.

It belongs to the class V-like SAM-binding methyltransferase superfamily. Histone-lysine methyltransferase family. EZ subfamily. As to quaternary structure, component of the PRC2/EED-EZH2 complex, which includes EED, EZH2, SUZ12, RBBP4 and RBBP7 and possibly AEBP2. The minimum components required for methyltransferase activity of the PRC2/EED-EZH2 complex are EED, EZH2 and SUZ12. The PRC2 complex may also interact with DNMT1, DNMT3A, DNMT3B and PHF1 via the EZH2 subunit and with SIRT1 via the SUZ12 subunit. Interacts with HDAC1 and HDAC2. Binds ATRX via the SET domain. Interacts with PRAME. Interacts with CDYL. Interacts with CLOCK, BMAL1 and CRY1. Interacts with DNMT3L; the interaction is direct. Interacts with EZHIP; the interaction blocks EZH2 methyltransferase activity. Interacts with ZNF263; recruited to the SIX3 promoter along with other proteins involved in chromatin modification and transcriptional corepression where it contributes to transcriptional repression. Interacts with ARMC12. Interacts with ZMYND8; the interaction is dependent on the presence of chromatin. Interacts with DDX18; this interaction inhibits the PRC2 complex. Post-translationally, phosphorylated by AKT1. Phosphorylation by AKT1 reduces methyltransferase activity. Phosphorylation at Thr-345 by CDK1 and CDK2 promotes maintenance of H3K27me3 levels at EZH2-target loci, thus leading to epigenetic gene silencing. Sumoylated. In terms of processing, glycosylated: O-GlcNAcylation at Ser-75 by OGT increases stability of EZH2 and facilitates the formation of H3K27me3 by the PRC2/EED-EZH2 complex. As to expression, in the ovary, expressed in primordial follicles and oocytes and also in external follicle cells (at protein level). Expressed in many tissues. Overexpressed in numerous tumor types including carcinomas of the breast, colon, larynx, lymphoma and testis.

It is found in the nucleus. The catalysed reaction is L-lysyl(27)-[histone H3] + 3 S-adenosyl-L-methionine = N(6),N(6),N(6)-trimethyl-L-lysyl(27)-[histone H3] + 3 S-adenosyl-L-homocysteine + 3 H(+). Functionally, polycomb group (PcG) protein. Catalytic subunit of the PRC2/EED-EZH2 complex, which methylates 'Lys-9' (H3K9me) and 'Lys-27' (H3K27me) of histone H3, leading to transcriptional repression of the affected target gene. Able to mono-, di- and trimethylate 'Lys-27' of histone H3 to form H3K27me1, H3K27me2 and H3K27me3, respectively. Displays a preference for substrates with less methylation, loses activity when progressively more methyl groups are incorporated into H3K27, H3K27me0 &gt; H3K27me1 &gt; H3K27me2. Compared to EZH1-containing complexes, it is more abundant in embryonic stem cells and plays a major role in forming H3K27me3, which is required for embryonic stem cell identity and proper differentiation. The PRC2/EED-EZH2 complex may also serve as a recruiting platform for DNA methyltransferases, thereby linking two epigenetic repression systems. Genes repressed by the PRC2/EED-EZH2 complex include HOXC8, HOXA9, MYT1, CDKN2A and retinoic acid target genes. EZH2 can also methylate non-histone proteins such as the transcription factor GATA4 and the nuclear receptor RORA. Regulates the circadian clock via histone methylation at the promoter of the circadian genes. Essential for the CRY1/2-mediated repression of the transcriptional activation of PER1/2 by the CLOCK-BMAL1 heterodimer; involved in the di and trimethylation of 'Lys-27' of histone H3 on PER1/2 promoters which is necessary for the CRY1/2 proteins to inhibit transcription. The sequence is that of Histone-lysine N-methyltransferase EZH2 from Homo sapiens (Human).